A 106-amino-acid chain; its full sequence is Antitoxin MazE3 (106 aa).

In terms of assembly, forms a complex with cognate toxin MazF3, possibly with 1:1 stoichiometry.

In terms of biological role, antitoxin component of a type II toxin-antitoxin (TA) system. Upon expression in E.coli and M.smegmatis neutralizes the effect of cognate toxin MazF3. Overexpression of MazE3 alone decreased persister cells formation in M.smegmatis upon challenge with gentamicin or kanamycin. This is Antitoxin MazE3 (mazE3) from Mycobacterium tuberculosis (strain ATCC 25618 / H37Rv).